The primary structure comprises 431 residues: Protein SHQ1 homolog (431 aa).

Belongs to the SHQ1 family.

Functionally, required for the quantitative accumulation of H/ACA ribonucleoproteins (RNPs). This chain is Protein SHQ1 homolog, found in Caenorhabditis elegans.